The sequence spans 742 residues: Phosphoribosylformylglycinamidine synthase subunit PurL (742 aa).

H54 is a catalytic residue. Residues Y57 and K96 each coordinate ATP. Residue E98 participates in Mg(2+) binding. Residues 99–102 (SHNH) and R121 each bind substrate. Catalysis depends on H100, which acts as the Proton acceptor. Position 122 (D122) interacts with Mg(2+). Q245 serves as a coordination point for substrate. D273 contributes to the Mg(2+) binding site. Residue 317–319 (ESQ) participates in substrate binding. The ATP site is built by D500 and G537. Mg(2+) is bound at residue N538. A substrate-binding site is contributed by S540.

It belongs to the FGAMS family. In terms of assembly, monomer. Part of the FGAM synthase complex composed of 1 PurL, 1 PurQ and 2 PurS subunits.

It is found in the cytoplasm. The enzyme catalyses N(2)-formyl-N(1)-(5-phospho-beta-D-ribosyl)glycinamide + L-glutamine + ATP + H2O = 2-formamido-N(1)-(5-O-phospho-beta-D-ribosyl)acetamidine + L-glutamate + ADP + phosphate + H(+). Its pathway is purine metabolism; IMP biosynthesis via de novo pathway; 5-amino-1-(5-phospho-D-ribosyl)imidazole from N(2)-formyl-N(1)-(5-phospho-D-ribosyl)glycinamide: step 1/2. Part of the phosphoribosylformylglycinamidine synthase complex involved in the purines biosynthetic pathway. Catalyzes the ATP-dependent conversion of formylglycinamide ribonucleotide (FGAR) and glutamine to yield formylglycinamidine ribonucleotide (FGAM) and glutamate. The FGAM synthase complex is composed of three subunits. PurQ produces an ammonia molecule by converting glutamine to glutamate. PurL transfers the ammonia molecule to FGAR to form FGAM in an ATP-dependent manner. PurS interacts with PurQ and PurL and is thought to assist in the transfer of the ammonia molecule from PurQ to PurL. The polypeptide is Phosphoribosylformylglycinamidine synthase subunit PurL (Geobacillus sp. (strain WCH70)).